The primary structure comprises 282 residues: Protoheme IX farnesyltransferase (282 aa).

A run of 9 helical transmembrane segments spans residues 13 to 33 (VAGM…GAAG), 36 to 56 (MVTS…FNQI), 74 to 96 (ASGR…PALI), 101 to 120 (AGGV…YNGV), 129 to 149 (AFSL…GWLA), 156 to 176 (SPEI…HFWL), 207 to 227 (LWYA…FIAE), 232 to 252 (IAVC…LASP), and 261 to 281 (VSML…SGII).

Belongs to the UbiA prenyltransferase family. Protoheme IX farnesyltransferase subfamily.

The protein resides in the cell inner membrane. It carries out the reaction heme b + (2E,6E)-farnesyl diphosphate + H2O = Fe(II)-heme o + diphosphate. The protein operates within porphyrin-containing compound metabolism; heme O biosynthesis; heme O from protoheme: step 1/1. Its function is as follows. Converts heme B (protoheme IX) to heme O by substitution of the vinyl group on carbon 2 of heme B porphyrin ring with a hydroxyethyl farnesyl side group. This is Protoheme IX farnesyltransferase from Oleidesulfovibrio alaskensis (strain ATCC BAA-1058 / DSM 17464 / G20) (Desulfovibrio alaskensis).